The sequence spans 368 residues: Ribulose bisphosphate carboxylase-like protein 1 (368 aa).

Belongs to the RuBisCO large chain family. Type IV subfamily.

Functionally, unknown. Probably does not have RuBisCO activity. The polypeptide is Ribulose bisphosphate carboxylase-like protein 1 (rlp1) (Rhodopseudomonas palustris (strain ATCC BAA-98 / CGA009)).